We begin with the raw amino-acid sequence, 316 residues long: 4-diphosphocytidyl-2-C-methyl-D-erythritol kinase (316 aa).

Lys23 is a catalytic residue. 108 to 118 serves as a coordination point for ATP; the sequence is PVAGGMAGGSA. The active site involves Asp150.

It belongs to the GHMP kinase family. IspE subfamily.

It catalyses the reaction 4-CDP-2-C-methyl-D-erythritol + ATP = 4-CDP-2-C-methyl-D-erythritol 2-phosphate + ADP + H(+). Its pathway is isoprenoid biosynthesis; isopentenyl diphosphate biosynthesis via DXP pathway; isopentenyl diphosphate from 1-deoxy-D-xylulose 5-phosphate: step 3/6. Functionally, catalyzes the phosphorylation of the position 2 hydroxy group of 4-diphosphocytidyl-2C-methyl-D-erythritol. This is 4-diphosphocytidyl-2-C-methyl-D-erythritol kinase from Mycolicibacterium paratuberculosis (strain ATCC BAA-968 / K-10) (Mycobacterium paratuberculosis).